A 74-amino-acid chain; its full sequence is Guanine nucleotide-binding protein G(T) subunit gamma-T1 (74 aa).

Cysteine methyl ester is present on Cys71. The S-farnesyl cysteine moiety is linked to residue Cys71. A propeptide spans 72–74 (VIS) (removed in mature form).

This sequence belongs to the G protein gamma family. In terms of assembly, g proteins are composed of 3 units, alpha, beta and gamma. In terms of tissue distribution, retinal rod outer segment.

The protein localises to the cell membrane. Guanine nucleotide-binding proteins (G proteins) are involved as a modulator or transducer in various transmembrane signaling systems. The beta and gamma chains are required for the GTPase activity, for replacement of GDP by GTP, and for G protein-effector interaction. The chain is Guanine nucleotide-binding protein G(T) subunit gamma-T1 (GNGT1) from Bos taurus (Bovine).